Reading from the N-terminus, the 311-residue chain is Sulfate adenylyltransferase subunit 2 (311 aa).

Belongs to the PAPS reductase family. CysD subfamily. In terms of assembly, heterodimer composed of CysD, the smaller subunit, and CysN.

It carries out the reaction sulfate + ATP + H(+) = adenosine 5'-phosphosulfate + diphosphate. Its pathway is sulfur metabolism; hydrogen sulfide biosynthesis; sulfite from sulfate: step 1/3. With CysN forms the ATP sulfurylase (ATPS) that catalyzes the adenylation of sulfate producing adenosine 5'-phosphosulfate (APS) and diphosphate, the first enzymatic step in sulfur assimilation pathway. APS synthesis involves the formation of a high-energy phosphoric-sulfuric acid anhydride bond driven by GTP hydrolysis by CysN coupled to ATP hydrolysis by CysD. This chain is Sulfate adenylyltransferase subunit 2, found in Methylobacterium sp. (strain 4-46).